The following is a 142-amino-acid chain: Nucleoside diphosphate kinase (142 aa).

6 residues coordinate ATP: Lys-11, Phe-59, Arg-87, Thr-93, Arg-104, and Asn-114. His-117 acts as the Pros-phosphohistidine intermediate in catalysis.

Belongs to the NDK family. Mg(2+) serves as cofactor.

The protein resides in the cytoplasm. The enzyme catalyses a 2'-deoxyribonucleoside 5'-diphosphate + ATP = a 2'-deoxyribonucleoside 5'-triphosphate + ADP. It carries out the reaction a ribonucleoside 5'-diphosphate + ATP = a ribonucleoside 5'-triphosphate + ADP. Its function is as follows. Major role in the synthesis of nucleoside triphosphates other than ATP. The ATP gamma phosphate is transferred to the NDP beta phosphate via a ping-pong mechanism, using a phosphorylated active-site intermediate. The protein is Nucleoside diphosphate kinase of Hyperthermus butylicus (strain DSM 5456 / JCM 9403 / PLM1-5).